Here is a 308-residue protein sequence, read N- to C-terminus: Glutaminase (308 aa).

The substrate site is built by S66, N117, E161, N168, Y192, Y244, and V262.

It belongs to the glutaminase family. Homotetramer.

The enzyme catalyses L-glutamine + H2O = L-glutamate + NH4(+). This Cronobacter sakazakii (strain ATCC BAA-894) (Enterobacter sakazakii) protein is Glutaminase.